The sequence spans 596 residues: Ubiquilin-4 (596 aa).

Residues 13–87 (IRVTVKTPKD…VHLVIKTPQK (75 aa)) enclose the Ubiquitin-like domain. Residues lysine 23 and lysine 62 each participate in a glycyl lysine isopeptide (Lys-Gly) (interchain with G-Cter in SUMO2) cross-link. The segment at 89–148 (QDPVTAAASPPSTPDSASAPSTTPASPAAAPVQPCSSGNTTSDAGSGGGPSPVAAEGPSS) is disordered. Low complexity-rich tracts occupy residues 93-119 (TAAA…AAAP) and 139-148 (SPVAAEGPSS). Serine 139 is modified (phosphoserine). 2 STI1 domains span residues 187–224 (NPEM…QQLM) and 225–256 (ERNP…MQEM). Threonine 282 is modified (phosphothreonine). The segment at 297–361 (GNNPFSSLAG…QVHPTVSNPF (65 aa)) is disordered. Over residues 302–313 (SSLAGNSDNSSS) the composition is skewed to low complexity. Serine 313 bears the Phosphoserine mark. Pro residues predominate over residues 324 to 335 (LPNPWSPSPPTS). A compositionally biased stretch (gly residues) spans 339–349 (GSGGEGTGGSG). Polar residues predominate over residues 352 to 361 (QVHPTVSNPF). 2 STI1 domains span residues 388–435 (NPQL…QEQL) and 439–471 (LPVF…QQGL). Residues 482–528 (VPSLGSFGTPRTSVPLAGSNSGSSAEAPTSSPGVPATSPPSAGSNAQ) are disordered. Positions 499-513 (GSNSGSSAEAPTSSP) are enriched in polar residues. Positions 548–593 (PMPEVRFQQQLEQLNSMGFINREANLQALIATGGDINAAIERLLGS) constitute a UBA domain.

In terms of assembly, homooligomer. Binds signal sequences of proteins that are targeted to the endoplasmic reticulum. Interacts (via UBA domain) with GJA1 (not ubiquitinated) and with ubiquitin; both compete for the same binding site. Interacts (via UBA domain) with ubiquitin and with polyubiquitin chains. Interacts (via ubiquitin-like domain) with PSMD2 and PSMD4, regulatory subunits of the 26S proteasome. Interacts with ATXN1/SCA1; interaction with ATXN1 inhibits polyubiquitination of UBQLN4 and interferes with PSMD4 binding. Interacts with HERPUD1. Interacts (via ubiquitin-like domain) with UBQLN1 (via UBA domain). Interacts with UBQLN2. Interacts (via STI1 1 and 2 domains) with MAP1LC3A/B/C. Interacts with BAG6. Interacts with MRE11 (when ubiquitinated); interaction with ubiquitinated MRE11 leads to MRE11 removal from chromatin. Interacts with DESI1/POST; leading to nuclear export. Interacts with BCL2A1 and BCL2L10. Post-translationally, phosphorylated by ATM at Ser-313 in response to DNA damage, leading to localization in the nucleus and recruitment to sites of DNA damage. In terms of processing, ubiquitinated; this does not lead to proteasomal degradation. May undergo both 'Lys-48'- and 'Lys-63'-linked polyubiquitination. Detected in testis, ovary, thyroid, kidney, thymus, heart, liver, lung and spleen (at protein level). Highly expressed in heart, skeletal muscle, kidney, liver and brain. Detected at lower levels in testis, lung and spleen.

The protein resides in the nucleus. It is found in the cytoplasm. Its subcellular location is the chromosome. The protein localises to the endoplasmic reticulum. It localises to the perinuclear region. The protein resides in the cytoplasmic vesicle. It is found in the autophagosome. Regulator of protein degradation that mediates the proteasomal targeting of misfolded, mislocalized or accumulated proteins. Acts by binding polyubiquitin chains of target proteins via its UBA domain and by interacting with subunits of the proteasome via its ubiquitin-like domain. Key regulator of DNA repair that represses homologous recombination repair: in response to DNA damage, recruited to sites of DNA damage following phosphorylation by ATM and acts by binding and removing ubiquitinated MRE11 from damaged chromatin, leading to MRE11 degradation by the proteasome. MRE11 degradation prevents homologous recombination repair, redirecting double-strand break repair toward non-homologous end joining (NHEJ). Specifically recognizes and binds mislocalized transmembrane-containing proteins and targets them to proteasomal degradation. Collaborates with DESI1/POST in the export of ubiquitinated proteins from the nucleus to the cytoplasm. Plays a role in the regulation of the proteasomal degradation of non-ubiquitinated GJA1. Acts as an adapter protein that recruits UBQLN1 to the autophagy machinery. Mediates the association of UBQLN1 with autophagosomes and the autophagy-related protein LC3 (MAP1LC3A/B/C) and may assist in the maturation of autophagosomes to autolysosomes by mediating autophagosome-lysosome fusion. In Mus musculus (Mouse), this protein is Ubiquilin-4.